Reading from the N-terminus, the 200-residue chain is High mobility group protein B3 (200 aa).

Lys3 carries the post-translational modification N6-acetyllysine. 2 DNA-binding regions (HMG box) span residues 9-79 (PKGK…KDYG) and 93-161 (PKRP…ADYK). The residue at position 23 (Cys23) is a Cysteine sulfonic acid (-SO3H); alternate. Cys23 and Cys45 form a disulfide bridge. N6-acetyllysine is present on residues Lys30 and Lys43. The residue at position 45 (Cys45) is a Cysteine sulfonic acid (-SO3H); alternate. The interval 71–97 (YDREMKDYGPAKGGKKKKDPNAPKRPP) is disordered. Ser98 carries the post-translational modification Phosphoserine. Residue Cys104 is modified to Cysteine sulfonic acid (-SO3H). An N6-acetyllysine mark is found at Lys112 and Lys139. Residues 163–200 (KGKFDGAKGAAKVARKKVEEEDEEDEEEEEEEEEEEDE) are disordered. The segment covering 182–200 (EEDEEDEEEEEEEEEEEDE) has biased composition (acidic residues).

Belongs to the HMGB family. Reduction/oxidation of cysteine residues Cys-23, Cys-45 and Cys-104 and a possible intramolecular disulfide bond involving Cys-23 and Cys-45 give rise to different redox forms with specific functional activities in various cellular compartments: 1- fully reduced HMGB3 (HMGB3C23hC45hC104h), 2- disulfide HMGB3 (HMGB3C23-C45C104h) and 3- sulfonyl HMGB3 (HMGB3C23soC45soC104so).

The protein localises to the nucleus. It localises to the chromosome. It is found in the cytoplasm. In terms of biological role, multifunctional protein with various roles in different cellular compartments. May act in a redox sensitive manner. Associates with chromatin and binds DNA with a preference for non-canonical DNA structures such as single-stranded DNA. Can bend DNA and enhance DNA flexibility by looping thus providing a mechanism to promote activities on various gene promoters. Proposed to be involved in the innate immune response to nucleic acids by acting as a cytoplasmic promiscuous immunogenic DNA/RNA sensor. Negatively regulates B-cell and myeloid cell differentiation. In hematopoietic stem cells may regulate the balance between self-renewal and differentiation. Involved in negative regulation of canonical Wnt signaling. In Bos taurus (Bovine), this protein is High mobility group protein B3 (HMGB3).